Reading from the N-terminus, the 376-residue chain is 23S rRNA (uracil(747)-C(5))-methyltransferase RlmC (376 aa).

Residues Cys-3, Cys-11, Cys-14, and Cys-87 each contribute to the [4Fe-4S] cluster site. Residues Gln-212, Phe-241, Glu-262, and Asn-307 each contribute to the S-adenosyl-L-methionine site. Residue Cys-334 is the Nucleophile of the active site.

Belongs to the class I-like SAM-binding methyltransferase superfamily. RNA M5U methyltransferase family. RlmC subfamily.

It catalyses the reaction uridine(747) in 23S rRNA + S-adenosyl-L-methionine = 5-methyluridine(747) in 23S rRNA + S-adenosyl-L-homocysteine + H(+). Catalyzes the formation of 5-methyl-uridine at position 747 (m5U747) in 23S rRNA. This chain is 23S rRNA (uracil(747)-C(5))-methyltransferase RlmC, found in Citrobacter koseri (strain ATCC BAA-895 / CDC 4225-83 / SGSC4696).